The primary structure comprises 454 residues: Bifunctional protein GlmU (454 aa).

Positions 1–226 (MSTTVIILAA…AFEVEGVNDR (226 aa)) are pyrophosphorylase. UDP-N-acetyl-alpha-D-glucosamine contacts are provided by residues 8 to 11 (LAAG), Lys22, Gln73, 78 to 79 (GT), 100 to 102 (YGD), Gly137, Glu151, Asn166, and Asn224. Asp102 is a binding site for Mg(2+). Asn224 lines the Mg(2+) pocket. Residues 227 to 247 (LQLAALEREFQKQQAKELMQQ) form a linker region. Residues 248-454 (GVTFADPARF…NYQRPQKLKK (207 aa)) are N-acetyltransferase. UDP-N-acetyl-alpha-D-glucosamine contacts are provided by Arg330 and Lys348. His360 acts as the Proton acceptor in catalysis. Residues Tyr363 and Asn374 each contribute to the UDP-N-acetyl-alpha-D-glucosamine site. Residues Ala377, 383–384 (NY), Ser402, Ala420, and Arg437 each bind acetyl-CoA.

In the N-terminal section; belongs to the N-acetylglucosamine-1-phosphate uridyltransferase family. It in the C-terminal section; belongs to the transferase hexapeptide repeat family. In terms of assembly, homotrimer. Requires Mg(2+) as cofactor.

It is found in the cytoplasm. The catalysed reaction is alpha-D-glucosamine 1-phosphate + acetyl-CoA = N-acetyl-alpha-D-glucosamine 1-phosphate + CoA + H(+). It catalyses the reaction N-acetyl-alpha-D-glucosamine 1-phosphate + UTP + H(+) = UDP-N-acetyl-alpha-D-glucosamine + diphosphate. Its pathway is nucleotide-sugar biosynthesis; UDP-N-acetyl-alpha-D-glucosamine biosynthesis; N-acetyl-alpha-D-glucosamine 1-phosphate from alpha-D-glucosamine 6-phosphate (route II): step 2/2. The protein operates within nucleotide-sugar biosynthesis; UDP-N-acetyl-alpha-D-glucosamine biosynthesis; UDP-N-acetyl-alpha-D-glucosamine from N-acetyl-alpha-D-glucosamine 1-phosphate: step 1/1. It participates in bacterial outer membrane biogenesis; LPS lipid A biosynthesis. In terms of biological role, catalyzes the last two sequential reactions in the de novo biosynthetic pathway for UDP-N-acetylglucosamine (UDP-GlcNAc). The C-terminal domain catalyzes the transfer of acetyl group from acetyl coenzyme A to glucosamine-1-phosphate (GlcN-1-P) to produce N-acetylglucosamine-1-phosphate (GlcNAc-1-P), which is converted into UDP-GlcNAc by the transfer of uridine 5-monophosphate (from uridine 5-triphosphate), a reaction catalyzed by the N-terminal domain. This is Bifunctional protein GlmU from Acinetobacter baumannii (strain ACICU).